The following is a 281-amino-acid chain: Acyl-[acyl-carrier-protein]--UDP-N-acetylglucosamine O-acyltransferase (281 aa).

Belongs to the transferase hexapeptide repeat family. LpxA subfamily. In terms of assembly, homotrimer.

It is found in the cytoplasm. The enzyme catalyses a (3R)-hydroxyacyl-[ACP] + UDP-N-acetyl-alpha-D-glucosamine = a UDP-3-O-[(3R)-3-hydroxyacyl]-N-acetyl-alpha-D-glucosamine + holo-[ACP]. The protein operates within glycolipid biosynthesis; lipid IV(A) biosynthesis; lipid IV(A) from (3R)-3-hydroxytetradecanoyl-[acyl-carrier-protein] and UDP-N-acetyl-alpha-D-glucosamine: step 1/6. Functionally, involved in the biosynthesis of lipid A, a phosphorylated glycolipid that anchors the lipopolysaccharide to the outer membrane of the cell. The protein is Acyl-[acyl-carrier-protein]--UDP-N-acetylglucosamine O-acyltransferase of Rickettsia bellii (strain OSU 85-389).